The primary structure comprises 508 residues: 4-trimethylaminobutyraldehyde dehydrogenase A (508 aa).

NAD(+)-binding positions include lysine 194 and 246–250 (GSVPT). Glutamate 268 functions as the Proton acceptor in the catalytic mechanism. Cysteine 302 functions as the Nucleophile in the catalytic mechanism. Residue glutamate 405 coordinates NAD(+).

It belongs to the aldehyde dehydrogenase family. In terms of assembly, homotetramer.

The protein resides in the cytoplasm. Its subcellular location is the cytosol. The catalysed reaction is 4-(trimethylamino)butanal + NAD(+) + H2O = 4-(trimethylamino)butanoate + NADH + 2 H(+). It carries out the reaction an aldehyde + NAD(+) + H2O = a carboxylate + NADH + 2 H(+). Its pathway is amine and polyamine biosynthesis; carnitine biosynthesis. Its function is as follows. Converts gamma-trimethylaminobutyraldehyde into gamma-butyrobetaine with high efficiency (in vitro). Can catalyze the irreversible oxidation of a broad range of aldehydes to the corresponding acids in an NAD-dependent reaction, but with low efficiency. This is 4-trimethylaminobutyraldehyde dehydrogenase A (aldh9a1a) from Danio rerio (Zebrafish).